The following is a 115-amino-acid chain: NAD(P)H-quinone oxidoreductase subunit M (115 aa).

Belongs to the complex I NdhM subunit family. In terms of assembly, NDH-1 can be composed of about 15 different subunits; different subcomplexes with different compositions have been identified which probably have different functions.

Its subcellular location is the cellular thylakoid membrane. The enzyme catalyses a plastoquinone + NADH + (n+1) H(+)(in) = a plastoquinol + NAD(+) + n H(+)(out). The catalysed reaction is a plastoquinone + NADPH + (n+1) H(+)(in) = a plastoquinol + NADP(+) + n H(+)(out). In terms of biological role, NDH-1 shuttles electrons from an unknown electron donor, via FMN and iron-sulfur (Fe-S) centers, to quinones in the respiratory and/or the photosynthetic chain. The immediate electron acceptor for the enzyme in this species is believed to be plastoquinone. Couples the redox reaction to proton translocation, and thus conserves the redox energy in a proton gradient. Cyanobacterial NDH-1 also plays a role in inorganic carbon-concentration. This is NAD(P)H-quinone oxidoreductase subunit M from Trichodesmium erythraeum (strain IMS101).